Reading from the N-terminus, the 306-residue chain is UDP-3-O-acyl-N-acetylglucosamine deacetylase (306 aa).

Residues H79, H238, and D242 each contribute to the Zn(2+) site. H265 acts as the Proton donor in catalysis.

It belongs to the LpxC family. It depends on Zn(2+) as a cofactor.

It carries out the reaction a UDP-3-O-[(3R)-3-hydroxyacyl]-N-acetyl-alpha-D-glucosamine + H2O = a UDP-3-O-[(3R)-3-hydroxyacyl]-alpha-D-glucosamine + acetate. Its pathway is glycolipid biosynthesis; lipid IV(A) biosynthesis; lipid IV(A) from (3R)-3-hydroxytetradecanoyl-[acyl-carrier-protein] and UDP-N-acetyl-alpha-D-glucosamine: step 2/6. Its function is as follows. Catalyzes the hydrolysis of UDP-3-O-myristoyl-N-acetylglucosamine to form UDP-3-O-myristoylglucosamine and acetate, the committed step in lipid A biosynthesis. This Yersinia pseudotuberculosis serotype O:1b (strain IP 31758) protein is UDP-3-O-acyl-N-acetylglucosamine deacetylase.